The sequence spans 341 residues: UPF0324 membrane protein SMU_2059c (341 aa).

The next 11 membrane-spanning stretches (helical) occupy residues 7-24 (KLSGLVLCFLIALPAWFL), 28-47 (FPLVGAPVFAIFLGMLLAIF), 68-85 (FAVVLLGFGLNLSQVLTV), 90-107 (LPIIVATISSSLLLAFLL), 120-142 (LVGVGSSICGGSAIAATAPVIQA), 147-169 (IAQSISVIFLFNILAALIFPTLG), 178-200 (GFALFAGTAVNDTSSVTATAAAW), 211-233 (GATIVKLTRTLAIIPITLGLSFY), 254-276 (VFPMFILYFILASIITTILTALG), 291-310 (FCIVMAMGAIGLNTNIVKLV), and 317-339 (IVLGASCWIVITLVSLGMQHLLG).

Belongs to the UPF0324 family.

It is found in the cell membrane. The polypeptide is UPF0324 membrane protein SMU_2059c (Streptococcus mutans serotype c (strain ATCC 700610 / UA159)).